The primary structure comprises 363 residues: NAD-dependent epimerase/dehydratase tndE (363 aa).

Residues 10–30 traverse the membrane as a helical segment; the sequence is GLVLITGVNGFLASHLALQLI. Y176 contributes to the NADP(+) binding site.

The protein belongs to the NAD(P)-dependent epimerase/dehydratase family. Dihydroflavonol-4-reductase subfamily.

It localises to the membrane. Its pathway is secondary metabolite biosynthesis; terpenoid biosynthesis. Functionally, NAD-dependent epimerase/dehydratase; part of the gene cluster that mediates the biosynthesis of talaronoid C, a fusicoccane diterpenoid with an unprecedented tricyclic 5/8/6 ring system. The first step in the pathway is performed by the fusicoccadiene synthase tndC that possesses both prenyl transferase and terpene cyclase activity, converting isopentenyl diphosphate and dimethylallyl diphosphate into geranylgeranyl diphosphate (GGDP) and further converting GGDP into talarodiene, a precursor for talaronoid C. The remaining enzymes from the cluster include the cytochrome P450 monooxygenase tndB, the aldehyde reductase tndE and the alcohol dehydrogenase tndF that are involved in the conversion of talarodiene into talaronoid C. This is NAD-dependent epimerase/dehydratase tndE from Aspergillus flavipes.